A 210-amino-acid polypeptide reads, in one-letter code: Somatotropin-1 (210 aa).

The N-terminal stretch at Met1 to Ala22 is a signal peptide. His38 contributes to the Zn(2+) binding site. A disulfide bridge links Cys71 with Cys183. Glu192 contacts Zn(2+). Cysteines 200 and 208 form a disulfide.

Belongs to the somatotropin/prolactin family.

It localises to the secreted. Growth hormone plays an important role in growth control and is involved in the regulation of several anabolic processes. Implicated as an osmoregulatory substance important for seawater adaptation. This is Somatotropin-1 (gh1) from Carassius auratus (Goldfish).